A 61-amino-acid polypeptide reads, in one-letter code: UPF0391 membrane protein Pnap_0032 (61 aa).

2 consecutive transmembrane segments (helical) span residues 5–25 (AIIF…GVAA) and 33–53 (VLFG…ALGV).

It belongs to the UPF0391 family.

It localises to the cell membrane. In Polaromonas naphthalenivorans (strain CJ2), this protein is UPF0391 membrane protein Pnap_0032.